Reading from the N-terminus, the 455-residue chain is Probable 1,4-beta-D-glucan cellobiohydrolase A (455 aa).

A signal peptide spans 1-17; it reads MHQRALLFSAFWTAVQA. N81 is a glycosylation site (N-linked (GlcNAc...) asparagine). E227 acts as the Nucleophile in catalysis. E232 serves as the catalytic Proton donor. An N-linked (GlcNAc...) asparagine glycan is attached at N285.

The protein belongs to the glycosyl hydrolase 7 (cellulase C) family.

The protein resides in the secreted. The catalysed reaction is Hydrolysis of (1-&gt;4)-beta-D-glucosidic linkages in cellulose and cellotetraose, releasing cellobiose from the non-reducing ends of the chains.. Its function is as follows. The biological conversion of cellulose to glucose generally requires three types of hydrolytic enzymes: (1) Endoglucanases which cut internal beta-1,4-glucosidic bonds; (2) Exocellobiohydrolases that cut the disaccharide cellobiose from the non-reducing end of the cellulose polymer chain; (3) Beta-1,4-glucosidases which hydrolyze the cellobiose and other short cello-oligosaccharides to glucose. This Aspergillus flavus (strain ATCC 200026 / FGSC A1120 / IAM 13836 / NRRL 3357 / JCM 12722 / SRRC 167) protein is Probable 1,4-beta-D-glucan cellobiohydrolase A (cbhA).